A 379-amino-acid chain; its full sequence is Homoserine O-acetyltransferase (379 aa).

Residues 1–24 (MSHDTTPPLPATGAWREGDPPGDR) are disordered. The AB hydrolase-1 domain maps to 60–365 (NAVLVLHALT…ASGHDGFLTE (306 aa)). Ser-165 acts as the Nucleophile in catalysis. Arg-236 is a binding site for substrate. Catalysis depends on residues Asp-329 and His-359. A substrate-binding site is contributed by Asp-360.

The protein belongs to the AB hydrolase superfamily. MetX family. Homodimer.

Its subcellular location is the cytoplasm. It catalyses the reaction L-homoserine + acetyl-CoA = O-acetyl-L-homoserine + CoA. Its pathway is amino-acid biosynthesis; L-methionine biosynthesis via de novo pathway; O-acetyl-L-homoserine from L-homoserine: step 1/1. Its function is as follows. Transfers an acetyl group from acetyl-CoA to L-homoserine, forming acetyl-L-homoserine. In Thermobifida fusca (strain YX), this protein is Homoserine O-acetyltransferase.